The sequence spans 267 residues: uncharacterized protein (267 aa).

Residues 2 to 198 form the ABC transporter domain; sequence LGANGAGKTT…FRNKFIVIEG (197 aa). ATP is bound at residue 3-10; it reads GANGAGKT.

This sequence belongs to the ABC transporter superfamily.

This is an uncharacterized protein from Alkalihalophilus pseudofirmus (strain ATCC BAA-2126 / JCM 17055 / OF4) (Bacillus pseudofirmus).